The primary structure comprises 320 residues: Olfactory receptor 10J1 (320 aa).

Residues 1–36 (MLLCFRFGNQSMKRENFTLITDFVFQGFSSFHEQQI) are Extracellular-facing. N-linked (GlcNAc...) asparagine glycosylation is found at Asn-9 and Asn-16. The chain crosses the membrane as a helical span at residues 37–57 (TLFGVFLALYILTLAGNIIIV). The Cytoplasmic segment spans residues 58 to 65 (TIIRMDLH). Residues 66–86 (LHTPMYFFLSMLSTSETVYTL) traverse the membrane as a helical segment. Topologically, residues 87–110 (VILPRMLSSLVGMSQPISLAGCAT) are extracellular. A disulfide bond links Cys-108 and Cys-199. The chain crosses the membrane as a helical span at residues 111–131 (QMFFFVTFGITNCFLLTAMGY). Residues 132-150 (DRYVAICNPLRYMVIMNKR) are Cytoplasmic-facing. The helical transmembrane segment at 151-171 (LRIQLVLGACSIGLIVAITQV) threads the bilayer. The Extracellular segment spans residues 172-207 (TSVFRLPFCARKVPHFFCDIRPVMKLSCIDTTVNEI). Residues 208 to 227 (LTLIISVLVLVVPMGLVFIS) form a helical membrane-spanning segment. At 228-247 (YVLIISTILKIASVEGRKKA) the chain is on the cytoplasmic side. A helical membrane pass occupies residues 248–268 (FATCASHLTVVIVHYSCASIA). Residues 269–281 (YLKPKSENTREHD) lie on the Extracellular side of the membrane. A helical transmembrane segment spans residues 282–302 (QLISVTYTVITPLLNPVVYTL). Over 303–320 (RNKEVKDALCRAVGGKFS) the chain is Cytoplasmic.

This sequence belongs to the G-protein coupled receptor 1 family.

The protein localises to the cell membrane. Functionally, odorant receptor. This chain is Olfactory receptor 10J1 (OR10J1), found in Homo sapiens (Human).